The primary structure comprises 245 residues: Precorrin-2 C(20)-methyltransferase (245 aa).

The protein belongs to the precorrin methyltransferase family. As to quaternary structure, homodimer.

The catalysed reaction is precorrin-2 + S-adenosyl-L-methionine = precorrin-3A + S-adenosyl-L-homocysteine + H(+). It functions in the pathway cofactor biosynthesis; adenosylcobalamin biosynthesis; cob(II)yrinate a,c-diamide from precorrin-2 (aerobic route): step 1/10. Its function is as follows. Methylates precorrin-2 at the C-20 position to produce precorrin-3A. In Sinorhizobium sp, this protein is Precorrin-2 C(20)-methyltransferase (cobI).